The sequence spans 148 residues: Urease accessory protein UreE (148 aa).

This sequence belongs to the UreE family.

It is found in the cytoplasm. Functionally, involved in urease metallocenter assembly. Binds nickel. Probably functions as a nickel donor during metallocenter assembly. The polypeptide is Urease accessory protein UreE (Halalkalibacterium halodurans (strain ATCC BAA-125 / DSM 18197 / FERM 7344 / JCM 9153 / C-125) (Bacillus halodurans)).